We begin with the raw amino-acid sequence, 235 residues long: uncharacterized protein (235 aa).

The S4 RNA-binding domain maps to 2–69 (CRLAKIISNA…KPRLWIYYKP (68 aa)). The active-site Nucleophile is the Asp102.

This sequence belongs to the pseudouridine synthase RsuA family.

The catalysed reaction is a uridine in RNA = a pseudouridine in RNA. This is an uncharacterized protein from Rickettsia prowazekii (strain Madrid E).